We begin with the raw amino-acid sequence, 268 residues long: Ribosomal RNA small subunit methyltransferase A (268 aa).

S-adenosyl-L-methionine contacts are provided by Asn12, Leu14, Gly38, Glu59, Asp82, and Asn107.

It belongs to the class I-like SAM-binding methyltransferase superfamily. rRNA adenine N(6)-methyltransferase family. RsmA subfamily.

The protein resides in the cytoplasm. The enzyme catalyses adenosine(1518)/adenosine(1519) in 16S rRNA + 4 S-adenosyl-L-methionine = N(6)-dimethyladenosine(1518)/N(6)-dimethyladenosine(1519) in 16S rRNA + 4 S-adenosyl-L-homocysteine + 4 H(+). Specifically dimethylates two adjacent adenosines (A1518 and A1519) in the loop of a conserved hairpin near the 3'-end of 16S rRNA in the 30S particle. May play a critical role in biogenesis of 30S subunits. This Onion yellows phytoplasma (strain OY-M) protein is Ribosomal RNA small subunit methyltransferase A.